Reading from the N-terminus, the 227-residue chain is Response regulator protein TodT (227 aa).

Positions 28 to 142 constitute a Response regulatory domain; that stretch reads VIYILDDDNA…ELLGAIRAAL (115 aa). D77 carries the 4-aspartylphosphate modification. The 66-residue stretch at 158–223 folds into the HTH luxR-type domain; sequence LKENYESLSK…DLVRVTERLK (66 aa). Residues 182–201 constitute a DNA-binding region (H-T-H motif); the sequence is NKQTALELDISEATVKVHRH.

In terms of processing, phosphorylated by TodS.

The protein resides in the cytoplasm. Its function is as follows. Member of the two-component regulatory system TodS/TodT involved in the regulation of toluene degradation. Phosphorylated TodT activates transcription of the tod operon (todXFC1C2BADEGIH). Binds specifically to a 6-bp palindromic DNA structure in the tod promoter region. The sequence is that of Response regulator protein TodT (todT) from Pseudomonas putida (strain ATCC 700007 / DSM 6899 / JCM 31910 / BCRC 17059 / LMG 24140 / F1).